A 452-amino-acid chain; its full sequence is Phosphoglucosamine mutase (452 aa).

The active-site Phosphoserine intermediate is the S108. 4 residues coordinate Mg(2+): S108, D247, D249, and D251. S108 carries the phosphoserine modification.

Belongs to the phosphohexose mutase family. Mg(2+) is required as a cofactor. Activated by phosphorylation.

The catalysed reaction is alpha-D-glucosamine 1-phosphate = D-glucosamine 6-phosphate. Catalyzes the conversion of glucosamine-6-phosphate to glucosamine-1-phosphate. The sequence is that of Phosphoglucosamine mutase from Burkholderia mallei (strain NCTC 10247).